The primary structure comprises 378 residues: MAGSYPEGAPAILADKRQQFGSRFLSDPARVFHHNAWDNVEWSEEQAAAAERKVQENSIQRVCQEKQVDYEINAHKYWNDFYKIHENGFFKDRHWLFTEFPELAPSQNQNHLKDWFLENKSEVCECRNNEDGPGLIMEEQHKCSSKSLEHKTQTPPVEENVTQKISDLEICADEFPGSSATYRILEVGCGVGNTVFPILQTNNDPGLFVYCCDFSSTAIELVQTNSEYDPSRCFAFVHDLCDEEKSYPVPKGSLDIIILIFVLSAVVPDKMQKAINRLSRLLKPGGMVLLRDYGRYDMAQLRFKKGQCLSGNFYVRGDGTRVYFFTQEELDTLFTTAGLEKVQNLVDRRLQVNRGKQLTMYRVWIQCKYCKPLLSSTS.

At Ala2 the chain carries N-acetylalanine. Residue Ser4 is modified to Phosphoserine. S-adenosyl-L-methionine is bound by residues Trp78 and Tyr82. Residue Thr154 is modified to Phosphothreonine. Gly188, Asp213, Asp239, Leu240, and Ile260 together coordinate S-adenosyl-L-methionine.

Belongs to the methyltransferase superfamily. METL family. In terms of assembly, monomer. Interacts with DALRD3.

It localises to the cytoplasm. It catalyses the reaction cytidine(32) in tRNA(Thr) + S-adenosyl-L-methionine = N(3)-methylcytidine(32) in tRNA(Thr) + S-adenosyl-L-homocysteine + H(+). It carries out the reaction cytidine(32) in tRNA(Arg)(CCU) + S-adenosyl-L-methionine = N(3)-methylcytidine(32) in tRNA(Arg)(CCU) + S-adenosyl-L-homocysteine + H(+). Functionally, S-adenosyl-L-methionine-dependent methyltransferase that mediates N(3)-methylcytidine modification of residue 32 of the tRNA anticodon loop of tRNA(Thr)(UGU) and tRNA(Arg)(CCU). This is tRNA N(3)-cytidine methyltransferase METTL2B from Homo sapiens (Human).